The following is a 469-amino-acid chain: Probable Xaa-Pro aminopeptidase PEPP (469 aa).

Mn(2+)-binding residues include D257, D268, E391, and E436.

Belongs to the peptidase M24B family. It depends on Mn(2+) as a cofactor.

The catalysed reaction is Release of any N-terminal amino acid, including proline, that is linked to proline, even from a dipeptide or tripeptide.. Its function is as follows. Catalyzes the removal of a penultimate prolyl residue from the N-termini of peptides. The polypeptide is Probable Xaa-Pro aminopeptidase PEPP (PEPP) (Fusarium vanettenii (strain ATCC MYA-4622 / CBS 123669 / FGSC 9596 / NRRL 45880 / 77-13-4) (Fusarium solani subsp. pisi)).